The following is a 157-amino-acid chain: Increased recombination centers protein 23 (157 aa).

Over Met1–Glu6 the chain is Cytoplasmic. A helical transmembrane segment spans residues Ile7–Ile29. Residues Pro30–Gly33 are Lumenal-facing. The chain crosses the membrane as a helical span at residues Leu34–Tyr56. The Cytoplasmic segment spans residues Lys57 to Ile157.

It localises to the endoplasmic reticulum membrane. Is probably involved in a pathway contributing to genomic integrity. In Saccharomyces cerevisiae (strain ATCC 204508 / S288c) (Baker's yeast), this protein is Increased recombination centers protein 23 (IRC23).